A 193-amino-acid polypeptide reads, in one-letter code: NAD(P)H-quinone oxidoreductase subunit I (193 aa).

2 consecutive 4Fe-4S ferredoxin-type domains span residues 55–84 and 95–124; these read GRIH…VDWE and KHYS…MTEE. Residues Cys-64, Cys-67, Cys-70, Cys-74, Cys-104, Cys-107, Cys-110, and Cys-114 each contribute to the [4Fe-4S] cluster site. The disordered stretch occupies residues 169-193; that stretch reads LDPHDLPSGNQRSGKRPEEIIAESD.

The protein belongs to the complex I 23 kDa subunit family. NDH-1 is composed of at least 11 different subunits. The cofactor is [4Fe-4S] cluster.

Its subcellular location is the cellular thylakoid membrane. The catalysed reaction is a plastoquinone + NADH + (n+1) H(+)(in) = a plastoquinol + NAD(+) + n H(+)(out). It carries out the reaction a plastoquinone + NADPH + (n+1) H(+)(in) = a plastoquinol + NADP(+) + n H(+)(out). Its function is as follows. NDH-1 shuttles electrons from an unknown electron donor, via FMN and iron-sulfur (Fe-S) centers, to quinones in the respiratory and/or the photosynthetic chain. The immediate electron acceptor for the enzyme in this species is believed to be plastoquinone. Couples the redox reaction to proton translocation, and thus conserves the redox energy in a proton gradient. The chain is NAD(P)H-quinone oxidoreductase subunit I from Rippkaea orientalis (strain PCC 8801 / RF-1) (Cyanothece sp. (strain PCC 8801)).